Consider the following 474-residue polypeptide: Coronin-1C (474 aa).

WD repeat units follow at residues glycine 78–serine 118, glycine 128–asparagine 168, methionine 172–aspartate 202, alanine 215–asparagine 249, and aspartate 263–histidine 303. A coiled-coil region spans residues valine 435–alanine 474. An N6-acetyllysine modification is found at lysine 446.

This sequence belongs to the WD repeat coronin family. As to quaternary structure, homotrimer. Binds F-actin. Interacts with RCC2. Interacts preferentially with nucleotide-free and GDP-bound RAC1. Interacts with VIM (via head domain). Interacts with MICAL2; this interaction recruits MICAL2 to the actin filaments. As to expression, detected in skeletal muscle (at protein level). Detected in fibroblasts (at protein level). Ubiquitous.

Its subcellular location is the cell membrane. The protein resides in the cell projection. It localises to the lamellipodium. The protein localises to the ruffle membrane. It is found in the cytoplasm. Its subcellular location is the cytoskeleton. The protein resides in the cell cortex. It localises to the endosome membrane. In terms of biological role, plays a role in directed cell migration by regulating the activation and subcellular location of RAC1. Increases the presence of activated RAC1 at the leading edge of migrating cells. Required for normal organization of the cytoskeleton, including the actin cytoskeleton, microtubules and the vimentin intermediate filaments. Required for normal cell proliferation, cell migration, and normal formation of lamellipodia. Plays a role in endoplasmic reticulum-associated endosome fission: localizes to endosome membrane tubules and promotes recruitment of TMCC1, leading to recruitment of the endoplasmic reticulum to endosome tubules for fission. Endosome membrane fission of early and late endosomes is essential to separate regions destined for lysosomal degradation from carriers to be recycled to the plasma membrane. Required for normal distribution of mitochondria within cells. The chain is Coronin-1C (Coro1c) from Mus musculus (Mouse).